We begin with the raw amino-acid sequence, 263 residues long: Interleukin-15 receptor subunit alpha (263 aa).

Positions 1-32 (MASPQLRGYGVQAIPVLLLLLLLLLLPLRVTP) are cleaved as a signal peptide. The Extracellular segment spans residues 33–205 (GTTCPPPVSI…ISPHSSKMTK (173 aa)). Positions 34-98 (TTCPPPVSIE…WTTPSLKCIR (65 aa)) constitute a Sushi domain. Disulfide bonds link Cys36–Cys78 and Cys62–Cys96. Asn51 carries an N-linked (GlcNAc...) asparagine glycan. Residues 113–135 (TPKVTSQPESPSPSAKEPEAFSP) show a composition bias toward low complexity. Positions 113-178 (TPKVTSQPES…HKSSRAPSLA (66 aa)) are disordered. Over residues 136 to 145 (KSDTAMTTET) the composition is skewed to polar residues. A compositionally biased stretch (low complexity) spans 154-169 (TPSQTTSAGTTGTGSH). A helical transmembrane segment spans residues 206-226 (VAISTSVLLVGAGVVMAFLAW). The Cytoplasmic portion of the chain corresponds to 227–263 (YIKSRQPSQPCRVEVETMETVPMTVRASSKEDEDTGA).

The interleukin-15 receptor IL15R is a heterotrimer of IL15RA, IL2RB and IL2RG. IL15RA also self-associates. Interacts with SYK. Post-translationally, N-glycosylated and O-glycosylated. In terms of processing, a soluble form (sIL-15RA) arises from proteolytic shedding of the membrane-anchored receptor. It also binds IL15 and thus interferes with IL15 binding to the membrane receptor. Widely expressed.

It is found in the membrane. The protein localises to the nucleus membrane. It localises to the cell surface. Its subcellular location is the secreted. The protein resides in the extracellular space. In terms of biological role, high-affinity receptor for interleukin-15. Can signal both in cis and trans where IL15R from one subset of cells presents IL15 to neighboring IL2RG-expressing cells. In neutrophils, binds and activates kinase SYK in response to IL15 stimulation. In neutrophils, required for IL15-induced phagocytosis in a SYK-dependent manner. This Mus musculus (Mouse) protein is Interleukin-15 receptor subunit alpha (Il15ra).